The primary structure comprises 529 residues: Chromosomal replication initiator protein DnaA (529 aa).

The domain I, interacts with DnaA modulators stretch occupies residues 1 to 72 (MQDFWHAASA…SLACDYWEAT (72 aa)). The interval 72 to 192 (TVDVQFVLDP…HVDDSVHERS (121 aa)) is domain II. The interval 193 to 409 (RLNQILTFDN…GALRKILAYS (217 aa)) is domain III, AAA+ region. The ATP site is built by Gly-237, Gly-239, Lys-240, and Thr-241. Positions 410–529 (NFHGKEITIE…LHVLEQTLKG (120 aa)) are domain IV, binds dsDNA.

It belongs to the DnaA family. In terms of assembly, oligomerizes as a right-handed, spiral filament on DNA at oriC.

It is found in the cytoplasm. In terms of biological role, plays an essential role in the initiation and regulation of chromosomal replication. ATP-DnaA binds to the origin of replication (oriC) to initiate formation of the DNA replication initiation complex once per cell cycle. Binds the DnaA box (a 9 base pair repeat at the origin) and separates the double-stranded (ds)DNA. Forms a right-handed helical filament on oriC DNA; dsDNA binds to the exterior of the filament while single-stranded (ss)DNA is stabiized in the filament's interior. The ATP-DnaA-oriC complex binds and stabilizes one strand of the AT-rich DNA unwinding element (DUE), permitting loading of DNA polymerase. After initiation quickly degrades to an ADP-DnaA complex that is not apt for DNA replication. Binds acidic phospholipids. This Ralstonia pickettii (strain 12J) protein is Chromosomal replication initiator protein DnaA.